The following is an 893-amino-acid chain: MAVASAAPGSIFWKQLLFSLLVLILFCDACQKISLQVPSHLRAEALVGKVNLKECLQSASLILSSDPDFRILEDGSIYTTHDLVLSSGKSFSILLSDSQGQGQKEIEIILEAGGKKVPKRHMKDAVLRRTKRRWAPIPCSLMENSLGPFPQHVQQVQSDAAQNYTIFYSISGPGVDKEPFNLFFIEKDTGDIFCTRSIDREQYQEFPIYAYATTADGYAPEYPLPLVFKVEDDNDNAPYFENKLTVFTVPENCRTGTSVGKVTAIDLDEPDTLHTRLKYKILQQIPNNPRHFTVHPDTGVITTTTPLLDREKCDTYKLIMEVRDMGGQPFGLFNTGTITISLEDENDNAPYFTETSYTVEVEENRIDVEILRMAVHDHDLPNTPHSRAVYQILQGNENGTFKISTDPNTNEAVLCVVKPLNYEVNRQVVLQIGVLNEAQFAKAVNSKTTTTMCTTVVTVKVKDHDEGPECQPPVKVIQSEDCLPTGTELLGYKAVDPERGTGEGLRYKKIQDEDNWFEINEYTGDLKTVKVLDRESTFVKNNQYNVSVIAFDADGRSCTGTLVVFLEDKNDHPPQIKQEELTICRHDKDYVVLEPTDQDGPDNGPPFQFILDNSASKLWTVETRDGKTAILRGRQDLDYDYYTVPIQIKDRHGASATHILPVRVCDCTIPSECRMPSKLSREAALANVFLGKWAILAMVLGSVLLLCILFTCFCVTVKKTVKKCFPEDVAQQNLIVSNTEGPGEEVMDANIRLPTQTSNVCDTSISVGTLGGQGVKTQQSFEMVKGGYTLDANKGGGHQTLESVKGVTDTGRYTYSDWHNFTQPRLGEKVYLCGQDEEHKLCEDYVRSYSYEGKGSVAGSVGCCSDRQEEEGLDFLDHLEPKFRTLAKTCVKK.

The N-terminal stretch at 1–29 (MAVASAAPGSIFWKQLLFSLLVLILFCDA) is a signal peptide. Positions 30 to 132 (CQKISLQVPS…KDAVLRRTKR (103 aa)) are excised as a propeptide. Cadherin domains lie at 133 to 240 (RWAP…APYF), 241 to 352 (ENKL…APYF), 353 to 470 (TETS…GPEC), 471 to 574 (QPPV…DHPP), and 575 to 682 (QIKQ…LSRE). Topologically, residues 133 to 692 (RWAPIPCSLM…AALANVFLGK (560 aa)) are extracellular. An N-linked (GlcNAc...) asparagine glycan is attached at Asn-163. Thr-383 is subject to Phosphothreonine. 2 N-linked (GlcNAc...) asparagine glycosylation sites follow: Asn-398 and Asn-545. Residues 693 to 715 (WAILAMVLGSVLLLCILFTCFCV) traverse the membrane as a helical segment. Over 716–893 (TVKKTVKKCF…RTLAKTCVKK (178 aa)) the chain is Cytoplasmic.

As to quaternary structure, binds to JUP/plakoglobin. In terms of processing, isoform 1A is phosphorylated on a serine but isoform 1B is not. Epidermis and weakly in tongue papillae.

It is found in the cell membrane. Its subcellular location is the cell junction. The protein resides in the desmosome. A component of desmosome cell-cell junctions which are required for positive regulation of cellular adhesion. Required for desmosome adhesion strength between the granular layers of the epidermis, as a result moderates epidermal proliferation and differentiation. Is therefore required to maintain postnatal epidermal barrier function and normal hair follicle morphology into adulthood. The chain is Desmocollin-1 (DSC1) from Bos taurus (Bovine).